Here is a 1030-residue protein sequence, read N- to C-terminus: Toll-like receptor 9 (1030 aa).

A signal peptide spans 1–24 (MGPRCTLHPLSLLVQVTALAAALA). The Extracellular portion of the chain corresponds to 25-816 (QGRLPAFLPC…LCLDETLSWN (792 aa)). A disulfide bridge connects residues C34 and C44. 46–50 (WLFLK) is a DNA binding site. LRR repeat units lie at residues 61 to 84 (RANV…DFVH), 86 to 109 (SSLR…HFPC), 121 to 146 (VPTL…SLVS), 149 to 165 (LSRT…LTGL), 166 to 189 (HALR…ALEV), 197 to 220 (LGNL…LPPS), 222 to 241 (ETLL…DLAN), 242 to 267 (LTAL…CREC), 282 to 305 (LSRL…WFRG), 307 to 331 (DRLQ…AFQG), 332 to 355 (LARL…HLHL), 362 to 385 (LRSL…TLQP), 389 to 412 (LPML…IFGA), 414 to 439 (PGLL…TREV), 469 to 493 (CKAF…MFAR), 495 to 518 (SRLE…QFVP), 519 to 542 (LTSL…SFTE), 544 to 571 (PRLE…SFVA), 573 to 597 (LPAL…LCSA), 599 to 621 (LCAL…LYLR), 626 to 649 (LRSL…ALDN), 651 to 674 (PKSL…SLTL), 675 to 698 (LPKL…SLPS), 700 to 722 (TQLR…FFAL), 723 to 746 (AKQL…WFGS), and 748 to 771 (VGNL…TFVG). N63 carries N-linked (GlcNAc...) asparagine glycosylation. DNA is bound by residues 71–76 (SNRIHH) and 94–108 (KWNC…MHFP). The cysteines at positions 97 and 109 are disulfide-linked. N128 is a glycosylation site (N-linked (GlcNAc...) asparagine). DNA-binding positions include Y131, R151, and 178–180 (YYK). C177 and C183 form a disulfide bridge. N-linked (GlcNAc...) asparagine glycosylation is present at N199. Residue Y207 participates in DNA binding. Residues N209 and N241 are each glycosylated (N-linked (GlcNAc...) asparagine). Disulfide bonds link C254–C267 and C257–C264. C257 carries S-palmitoyl cysteine lipidation. R261 serves as a coordination point for DNA. C264 carries S-palmitoyl cysteine lipidation. An N-linked (GlcNAc...) asparagine glycan is attached at N339. A disulfide bond links C469 and C499. N512 carries an N-linked (GlcNAc...) asparagine glycan. The N-linked (GlcNAc...) asparagine glycan is linked to N566. Residues N668 and N693 are each glycosylated (N-linked (GlcNAc...) asparagine). An N-linked (GlcNAc...) asparagine glycan is attached at N730. Intrachain disulfides connect C763–C789 and C765–C808. The chain crosses the membrane as a helical span at residues 817 to 837 (CFGISLLAMALGLVVPMLHHL). Residues 838–1030 (CGWDLWYCFH…NFCRGPTTAE (193 aa)) lie on the Cytoplasmic side of the membrane. Residues 865–1010 (LFYDAFVVFD…SFWAQLGTAL (146 aa)) form the TIR domain.

Belongs to the Toll-like receptor family. As to quaternary structure, monomer and homodimer. Exists as a monomer in the absence of unmethylated cytidine-phosphate-guanosine (CpG) ligand. Proteolytic processing of an insertion loop (Z-loop) is required for homodimerization upon binding to the unmethylated CpG ligand leading to its activation. Interacts with MYD88 via their respective TIR domains. Interacts with BTK. Interacts (via transmembrane domain) with UNC93B1. Interacts with CD300LH; the interaction may promote full activation of TLR9-triggered innate responses. Interacts with CNPY3 and HSP90B1; this interaction is required for proper folding in the endoplasmic reticulum. Interacts with SMPDL3B. Interacts with CD82; this interaction is essential for TLR9-dependent myddosome formation in response to CpG stimulation. Activated by proteolytic cleavage of the flexible loop between repeats LRR14 and LRR15 within the ectodomain. Cleavage requires UNC93B1. Proteolytically processed by first removing the majority of the ectodomain by either asparagine endopeptidase (AEP) or a cathepsin followed by a trimming event that is solely cathepsin mediated and required for optimal receptor signaling. Post-translationally, palmitoylated by ZDHHC3 in the Golgi regulates TLR9 trafficking from the Golgi to endosomes. Depalmitoylation by PPT1 controls the release of TLR9 from UNC93B1 in endosomes.

It is found in the endoplasmic reticulum membrane. The protein resides in the endosome. It localises to the lysosome. Its subcellular location is the cytoplasmic vesicle. The protein localises to the phagosome. Functionally, key component of innate and adaptive immunity. TLRs (Toll-like receptors) control host immune response against pathogens through recognition of molecular patterns specific to microorganisms. TLR9 is a nucleotide-sensing TLR which is activated by unmethylated cytidine-phosphate-guanosine (CpG) dinucleotides. Acts via MYD88 and TRAF6, leading to NF-kappa-B activation, cytokine secretion and the inflammatory response. Upon CpG stimulation, induces B-cell proliferation, activation, survival and antibody production. This Sus scrofa (Pig) protein is Toll-like receptor 9 (TLR9).